The primary structure comprises 777 residues: MRLKISLSKEPKHQELVSCVGWTTAEELYSCSDDHQIVKWNLLTSETSLIVKLPDDIYPIDLHWFPKSLGIKKQTQAESFVLTSSDGKFHLISKLGRVEKSVEAHCGAVLAGRWNYEGTALVTVGEDGQVKIWSKTGMLRSTLAQQGTPVYSVAWGPDSEKVLYTAGKQLIIKPLQPNAKVLQWKAHDGIILKVDWNSVNDLILSAGEDCKYKVWDSYGRVLYGSQPHEHPITSVAWAPDGELFAVGSFHTLRLCDKTGWSYALEKPNTGSIFNIAWSIDGTQIAGACGNGHVVFAHVVEQRWEWKNFQVTLTKRRTMQVRNVLNDAVDLLEFRDRVIKASLNHAHLVVSTSLQCYVFSTKNWNTPLIFDLKEGTVSLILQAERHFLLVDGGGIYLHSYEGRFISSPKFPGMRTDILNAQTVSLSNDTIAIKDKADEKIIFLFEASTGKPLGDGKLLSHKNEISEIALDQKGLTNDRKIAFIDKNRDLYITSVKRFGKEEQIIKLGTMVHTLAWCDTCNILCGIQDTRFTVWYYPNTIYVDRDILPKTLYERDASEYSKNPHIVSFVGNQVTIRRADGSLVHISISPYPAILHEYVSSSKWEEAVRLCRFVKEQSMWACLAAMAVANRDMVTAEIAYAAVGEIDKVRYINAIKDLPSRESKMAHILMFSGNIQEAETVLLQAGLVYQAIQININLYNWERALELAVKYKTHVDTVLAYRQKFLDTFGKQETNKRYLQYAEGLQIDWEKIKAKIEMEITKERDRSSSGQSSKSVGLKH.

7 WD repeats span residues 12–50 (KHQE…TSLI), 104–143 (AHCG…RSTL), 145–185 (QQGT…LQWK), 186–225 (AHDG…LYGS), 227–265 (PHEH…YALE), 267–306 (PNTG…WEWK), and 504–542 (KLGT…YVDR).

As to quaternary structure, component of the IFT complex B, at least composed of IFT20, IFT22, IFT25, IFT27, IFT46, IFT52, TRAF3IP1/IFT54, IFT57, IFT74, IFT80, IFT81, and IFT88. Interacts with IFT88. Interacts with IFT57 and IFT70B.

The protein resides in the cytoplasm. It is found in the cytoskeleton. It localises to the cilium basal body. The protein localises to the cilium axoneme. In terms of biological role, component of the intraflagellar transport (IFT) complex B, which is essential for the development and maintenance of motile and sensory cilia. This chain is Intraflagellar transport protein 80 homolog (Ift80), found in Mus musculus (Mouse).